Consider the following 192-residue polypeptide: Probable nicotinate-nucleotide adenylyltransferase (192 aa).

Belongs to the NadD family.

The catalysed reaction is nicotinate beta-D-ribonucleotide + ATP + H(+) = deamido-NAD(+) + diphosphate. The protein operates within cofactor biosynthesis; NAD(+) biosynthesis; deamido-NAD(+) from nicotinate D-ribonucleotide: step 1/1. In terms of biological role, catalyzes the reversible adenylation of nicotinate mononucleotide (NaMN) to nicotinic acid adenine dinucleotide (NaAD). This Rhizobium etli (strain ATCC 51251 / DSM 11541 / JCM 21823 / NBRC 15573 / CFN 42) protein is Probable nicotinate-nucleotide adenylyltransferase.